The chain runs to 273 residues: MSFDGKLKAQSILETYKNFDWSKCKLVIIQANDDDSSDSFIKQKLIACNTVGAKSELIKLSNQITQAELIEKIISLNHDVNVTGIILQLPVYPHLDKNSLLEAINPLKDVDGLTTNHLAEIKPCIVEAIITLKELFNLEFNNQKIVVVGLGITGGKPIYEFLKTSGYKVQACDKDTPNTFELIKSADIVFTAIGKSHFFQAKNFKKGVILFDIGVSRNKQNKLCGDINPEGIEKKARWWTKTPGGVGPFTVLAIIKNLWILHEKNKRCLQSSI.

NADP(+) contacts are provided by residues 149 to 151 (GLG) and Val215.

The protein belongs to the tetrahydrofolate dehydrogenase/cyclohydrolase family. Homodimer.

The catalysed reaction is (6R)-5,10-methylene-5,6,7,8-tetrahydrofolate + NADP(+) = (6R)-5,10-methenyltetrahydrofolate + NADPH. The enzyme catalyses (6R)-5,10-methenyltetrahydrofolate + H2O = (6R)-10-formyltetrahydrofolate + H(+). It participates in one-carbon metabolism; tetrahydrofolate interconversion. Catalyzes the oxidation of 5,10-methylenetetrahydrofolate to 5,10-methenyltetrahydrofolate and then the hydrolysis of 5,10-methenyltetrahydrofolate to 10-formyltetrahydrofolate. In Mycoplasma genitalium (strain ATCC 33530 / DSM 19775 / NCTC 10195 / G37) (Mycoplasmoides genitalium), this protein is Bifunctional protein FolD.